Consider the following 94-residue polypeptide: Co-chaperonin GroES (94 aa).

Belongs to the GroES chaperonin family. In terms of assembly, heptamer of 7 subunits arranged in a ring. Interacts with the chaperonin GroEL.

The protein localises to the cytoplasm. Functionally, together with the chaperonin GroEL, plays an essential role in assisting protein folding. The GroEL-GroES system forms a nano-cage that allows encapsulation of the non-native substrate proteins and provides a physical environment optimized to promote and accelerate protein folding. GroES binds to the apical surface of the GroEL ring, thereby capping the opening of the GroEL channel. The polypeptide is Co-chaperonin GroES (Finegoldia magna (strain ATCC 29328 / DSM 20472 / WAL 2508) (Peptostreptococcus magnus)).